The chain runs to 553 residues: Glutamine--tRNA ligase (553 aa).

The 'HIGH' region signature appears at 34-44; the sequence is PEPNGYLHIGH. Residues 35 to 37 and 41 to 47 contribute to the ATP site; these read EPN and HIGHAKS. The L-glutamine site is built by D68 and Y213. ATP-binding positions include T232 and 262-263; that span reads RL. A 'KMSKS' region motif is present at residues 269-273; it reads LTSKR.

The protein belongs to the class-I aminoacyl-tRNA synthetase family. In terms of assembly, monomer.

The protein resides in the cytoplasm. The catalysed reaction is tRNA(Gln) + L-glutamine + ATP = L-glutaminyl-tRNA(Gln) + AMP + diphosphate. The polypeptide is Glutamine--tRNA ligase (Psychromonas ingrahamii (strain DSM 17664 / CCUG 51855 / 37)).